Reading from the N-terminus, the 941-residue chain is RNA-directed RNA polymerase (941 aa).

Residues 875–918 form a disordered region; the sequence is SARQGGMGLPPPPPPPLGGGGMAGPPPPPFMGLRPESSVPTSVP. The span at 905–918 shows a compositional bias: low complexity; the sequence is MGLRPESSVPTSVP.

Forms a ribonucleoprotein complex with the 23S RNA, where a single polymerase molecule binds to a single viral RNA genome. Since the viral RNA is not encapsidated, ribonucleoprotein complex formation appears to be the strategy to survive in the host as persistent virus.

The protein localises to the host cytoplasm. It catalyses the reaction RNA(n) + a ribonucleoside 5'-triphosphate = RNA(n+1) + diphosphate. In terms of biological role, RNA-directed RNA polymerase that replicates the viral (+) and (-) genome. The chain is RNA-directed RNA polymerase from Saccharomyces 23S RNA narnavirus (ScNV-23S).